Consider the following 564-residue polypeptide: Centrosomal protein kizuna (564 aa).

The interval 1-21 (MSEAGRAAAGPCPEVSPSRSQ) is disordered. The stretch at 28 to 50 (RCLRDSETRRLELERKLMEYKSS) forms a coiled coil. Disordered regions lie at residues 178 to 201 (QPAA…PTQA), 304 to 345 (TGPQ…EDEP), 442 to 465 (ECGD…PNDS), 487 to 519 (IGNN…RPEF), and 531 to 564 (AFWG…DFYD). Residues 313 to 324 (QQAASQDSSSSS) are compositionally biased toward low complexity. A compositionally biased stretch (polar residues) spans 447 to 463 (SSVQSNESSYSLPSIPN). A compositionally biased stretch (basic and acidic residues) spans 493–519 (EAKESQEMCSERSSSSERSGDLSRPEF).

Belongs to the kizuna family.

Its subcellular location is the cytoplasm. It is found in the cytoskeleton. It localises to the microtubule organizing center. The protein localises to the centrosome. The protein resides in the cilium basal body. Centrosomal protein required for establishing a robust mitotic centrosome architecture that can endure the forces that converge on the centrosomes during spindle formation. Required for stabilizing the expanded pericentriolar material around the centriole. The sequence is that of Centrosomal protein kizuna (KIZ) from Gallus gallus (Chicken).